A 729-amino-acid chain; its full sequence is Polyribonucleotide nucleotidyltransferase (729 aa).

The Mg(2+) site is built by aspartate 509 and aspartate 515. The KH domain occupies 575–634; that stretch reads PRVISVKIPVDKIGEVIGPKGKMINQIQADSGAEITVEDDGTIYIGAVDGPSAESARSAI. The region spanning 646–718 is the S1 motif domain; it reads GERYLGTIVK…SRGKISLSPS (73 aa).

The protein belongs to the polyribonucleotide nucleotidyltransferase family. Mg(2+) is required as a cofactor.

It localises to the cytoplasm. It carries out the reaction RNA(n+1) + phosphate = RNA(n) + a ribonucleoside 5'-diphosphate. In terms of biological role, involved in mRNA degradation. Catalyzes the phosphorolysis of single-stranded polyribonucleotides processively in the 3'- to 5'-direction. The sequence is that of Polyribonucleotide nucleotidyltransferase from Frankia casuarinae (strain DSM 45818 / CECT 9043 / HFP020203 / CcI3).